The chain runs to 349 residues: uncharacterized protein (349 aa).

10 consecutive transmembrane segments (helical) span residues 15–35, 53–73, 91–111, 120–140, 147–167, 179–199, 218–238, 248–268, 276–296, and 302–322; these read VHSPIYLALAVVIFSAANPVT, ISFCNVLFVGNLCALGLMILI, WFLLTVTAILSRAIAPGLMFS, NVVLIGRLEPVFTLILSILLL, LSMVATLISFVGVAVTVFWGV, FGLGESFVAIAAFISAITTIL, LLGTFVFFWIAVIIYGFDHFM, WMLIYGAIIVVVGQVAWLAGL, INLASLVTPILAIIFAYLILL, and AQYLGGILLLLGAILSFIDNL. EamA domains lie at 39–164 and 191–319; these read IELG…VTVF and FISA…LSFI.

The protein belongs to the EamA transporter family.

Its subcellular location is the cell membrane. This is an uncharacterized protein from Synechocystis sp. (strain ATCC 27184 / PCC 6803 / Kazusa).